Here is a 392-residue protein sequence, read N- to C-terminus: Erythronate-4-phosphate dehydrogenase (392 aa).

Substrate-binding residues include Ser-48 and Thr-69. Asp-149 is an NAD(+) binding site. Arg-215 is an active-site residue. Asp-239 is an NAD(+) binding site. Residue Glu-244 is part of the active site. The active-site Proton donor is the His-261. Gly-264 is a binding site for NAD(+). Tyr-265 provides a ligand contact to substrate.

This sequence belongs to the D-isomer specific 2-hydroxyacid dehydrogenase family. PdxB subfamily. As to quaternary structure, homodimer.

The protein resides in the cytoplasm. It carries out the reaction 4-phospho-D-erythronate + NAD(+) = (R)-3-hydroxy-2-oxo-4-phosphooxybutanoate + NADH + H(+). It participates in cofactor biosynthesis; pyridoxine 5'-phosphate biosynthesis; pyridoxine 5'-phosphate from D-erythrose 4-phosphate: step 2/5. In terms of biological role, catalyzes the oxidation of erythronate-4-phosphate to 3-hydroxy-2-oxo-4-phosphonooxybutanoate. The sequence is that of Erythronate-4-phosphate dehydrogenase from Salinibacter ruber (strain DSM 13855 / M31).